The following is a 312-amino-acid chain: DNA-directed RNA polymerase subunit alpha (312 aa).

The interval 1-226 (MIEFEKPNIT…EHLNLFTNLT (226 aa)) is alpha N-terminal domain (alpha-NTD). The interval 243–312 (DDRILERTIE…DLGLGLKNDK (70 aa)) is alpha C-terminal domain (alpha-CTD).

The protein belongs to the RNA polymerase alpha chain family. In terms of assembly, homodimer. The RNAP catalytic core consists of 2 alpha, 1 beta, 1 beta' and 1 omega subunit. When a sigma factor is associated with the core the holoenzyme is formed, which can initiate transcription.

The catalysed reaction is RNA(n) + a ribonucleoside 5'-triphosphate = RNA(n+1) + diphosphate. In terms of biological role, DNA-dependent RNA polymerase catalyzes the transcription of DNA into RNA using the four ribonucleoside triphosphates as substrates. The polypeptide is DNA-directed RNA polymerase subunit alpha (Streptococcus sanguinis (strain SK36)).